Reading from the N-terminus, the 251-residue chain is Probable transcriptional regulatory protein Cpar_0525 (251 aa).

Belongs to the TACO1 family.

Its subcellular location is the cytoplasm. This Chlorobaculum parvum (strain DSM 263 / NCIMB 8327) (Chlorobium vibrioforme subsp. thiosulfatophilum) protein is Probable transcriptional regulatory protein Cpar_0525.